The primary structure comprises 365 residues: UDP-N-acetylglucosamine--N-acetylmuramyl-(pentapeptide) pyrophosphoryl-undecaprenol N-acetylglucosamine transferase (365 aa).

Residues 17 to 19 (TGG), Asn-129, Arg-167, Ser-194, Ile-250, 269 to 274 (ALTVSE), and Gln-295 each bind UDP-N-acetyl-alpha-D-glucosamine.

This sequence belongs to the glycosyltransferase 28 family. MurG subfamily.

The protein resides in the cell inner membrane. The catalysed reaction is di-trans,octa-cis-undecaprenyl diphospho-N-acetyl-alpha-D-muramoyl-L-alanyl-D-glutamyl-meso-2,6-diaminopimeloyl-D-alanyl-D-alanine + UDP-N-acetyl-alpha-D-glucosamine = di-trans,octa-cis-undecaprenyl diphospho-[N-acetyl-alpha-D-glucosaminyl-(1-&gt;4)]-N-acetyl-alpha-D-muramoyl-L-alanyl-D-glutamyl-meso-2,6-diaminopimeloyl-D-alanyl-D-alanine + UDP + H(+). Its pathway is cell wall biogenesis; peptidoglycan biosynthesis. Functionally, cell wall formation. Catalyzes the transfer of a GlcNAc subunit on undecaprenyl-pyrophosphoryl-MurNAc-pentapeptide (lipid intermediate I) to form undecaprenyl-pyrophosphoryl-MurNAc-(pentapeptide)GlcNAc (lipid intermediate II). This chain is UDP-N-acetylglucosamine--N-acetylmuramyl-(pentapeptide) pyrophosphoryl-undecaprenol N-acetylglucosamine transferase, found in Shewanella pealeana (strain ATCC 700345 / ANG-SQ1).